Here is a 424-residue protein sequence, read N- to C-terminus: UPF0229 protein Avin_46880 (424 aa).

A disordered region spans residues 57–108; it reads RDIDEPVLHHGRGGKQTIVHPGNKEFTAGERIPRPSGGGGGGSGSGKASNSG. Residues 92-101 are compositionally biased toward gly residues; that stretch reads SGGGGGGSGS.

This sequence belongs to the UPF0229 family.

The sequence is that of UPF0229 protein Avin_46880 from Azotobacter vinelandii (strain DJ / ATCC BAA-1303).